Reading from the N-terminus, the 274-residue chain is DNA-directed RNA polymerase subunit Rpo3 (274 aa).

The [3Fe-4S] cluster site is built by C202, C205, and C208.

It belongs to the archaeal Rpo3/eukaryotic RPB3 RNA polymerase subunit family. In terms of assembly, part of the RNA polymerase complex. It depends on [3Fe-4S] cluster as a cofactor.

It is found in the cytoplasm. The enzyme catalyses RNA(n) + a ribonucleoside 5'-triphosphate = RNA(n+1) + diphosphate. In terms of biological role, DNA-dependent RNA polymerase (RNAP) catalyzes the transcription of DNA into RNA using the four ribonucleoside triphosphates as substrates. The protein is DNA-directed RNA polymerase subunit Rpo3 of Methanobrevibacter smithii (strain ATCC 35061 / DSM 861 / OCM 144 / PS).